The sequence spans 199 residues: Small ribosomal subunit protein uS4 (199 aa).

An S4 RNA-binding domain is found at 94-157 (SRLDNLVYRA…RKLKLVQEAL (64 aa)).

This sequence belongs to the universal ribosomal protein uS4 family. Part of the 30S ribosomal subunit. Contacts protein S5. The interaction surface between S4 and S5 is involved in control of translational fidelity.

One of the primary rRNA binding proteins, it binds directly to 16S rRNA where it nucleates assembly of the body of the 30S subunit. Its function is as follows. With S5 and S12 plays an important role in translational accuracy. The polypeptide is Small ribosomal subunit protein uS4 (Mycoplasmopsis synoviae (strain 53) (Mycoplasma synoviae)).